The chain runs to 631 residues: 1-deoxy-D-xylulose-5-phosphate synthase (631 aa).

Thiamine diphosphate is bound by residues histidine 78 and 119 to 121 (AHS). Position 150 (aspartate 150) interacts with Mg(2+). Residues 151–152 (GA), asparagine 179, tyrosine 286, and glutamate 368 contribute to the thiamine diphosphate site. Asparagine 179 provides a ligand contact to Mg(2+).

It belongs to the transketolase family. DXPS subfamily. In terms of assembly, homodimer. The cofactor is Mg(2+). Requires thiamine diphosphate as cofactor.

It carries out the reaction D-glyceraldehyde 3-phosphate + pyruvate + H(+) = 1-deoxy-D-xylulose 5-phosphate + CO2. Its pathway is metabolic intermediate biosynthesis; 1-deoxy-D-xylulose 5-phosphate biosynthesis; 1-deoxy-D-xylulose 5-phosphate from D-glyceraldehyde 3-phosphate and pyruvate: step 1/1. In terms of biological role, catalyzes the acyloin condensation reaction between C atoms 2 and 3 of pyruvate and glyceraldehyde 3-phosphate to yield 1-deoxy-D-xylulose-5-phosphate (DXP). This is 1-deoxy-D-xylulose-5-phosphate synthase from Verminephrobacter eiseniae (strain EF01-2).